The sequence spans 185 residues: Ribosome-recycling factor (185 aa).

This sequence belongs to the RRF family.

The protein localises to the cytoplasm. Its function is as follows. Responsible for the release of ribosomes from messenger RNA at the termination of protein biosynthesis. May increase the efficiency of translation by recycling ribosomes from one round of translation to another. The chain is Ribosome-recycling factor from Legionella pneumophila (strain Corby).